We begin with the raw amino-acid sequence, 77 residues long: MKTSVLLVILGIAAITVQCTASESVEQDSLRTFVDAVLGWNAEMASEARCGGWMAKCADSDDCCEAFHCTRFNVCGK.

An N-terminal signal peptide occupies residues 1–21 (MKTSVLLVILGIAAITVQCTA). Residues 22–49 (SESVEQDSLRTFVDAVLGWNAEMASEAR) constitute a propeptide that is removed on maturation. 3 disulfides stabilise this stretch: Cys-50-Cys-64, Cys-57-Cys-69, and Cys-63-Cys-75.

The protein belongs to the neurotoxin 10 (Hwtx-1) family. 65 (Jztx-21) subfamily. As to expression, expressed by the venom gland.

The protein resides in the secreted. Functionally, probable ion channel inhibitor. The sequence is that of U14-theraphotoxin-Cg1b from Chilobrachys guangxiensis (Chinese earth tiger tarantula).